Here is a 74-residue protein sequence, read N- to C-terminus: RNA-binding protein Hfq (74 aa).

The 61-residue stretch at 9–69 (DQFLNQLRKD…ISTFAPEKNV (61 aa)) folds into the Sm domain.

The protein belongs to the Hfq family. In terms of assembly, homohexamer.

In terms of biological role, RNA chaperone that binds small regulatory RNA (sRNAs) and mRNAs to facilitate mRNA translational regulation in response to envelope stress, environmental stress and changes in metabolite concentrations. Also binds with high specificity to tRNAs. The sequence is that of RNA-binding protein Hfq from Geobacillus sp. (strain WCH70).